The sequence spans 273 residues: Proteasome subunit beta type-10 (273 aa).

Met-1 is modified (N-acetylmethionine). The propeptide at Met-1–Gly-39 is removed in mature form. The active-site Nucleophile is Thr-40. At Ser-230 the chain carries Phosphoserine.

It belongs to the peptidase T1B family. The 26S proteasome consists of a 20S proteasome core and two 19S regulatory subunits. The 20S proteasome core is composed of 28 subunits that are arranged in four stacked rings, resulting in a barrel-shaped structure. The two end rings are each formed by seven alpha subunits, and the two central rings are each formed by seven beta subunits. The catalytic chamber with the active sites is on the inside of the barrel. Component of the immunoproteasome, where it displaces the equivalent housekeeping subunit PSMB7. Component of the spermatoproteasome, a form of the proteasome specifically found in testis. Post-translationally, autocleaved. The resulting N-terminal Thr residue of the mature subunit is responsible for the nucleophile proteolytic activity.

The protein localises to the cytoplasm. Its subcellular location is the nucleus. It catalyses the reaction Cleavage of peptide bonds with very broad specificity.. The proteasome is a multicatalytic proteinase complex which is characterized by its ability to cleave peptides with Arg, Phe, Tyr, Leu, and Glu adjacent to the leaving group at neutral or slightly basic pH. The proteasome has an ATP-dependent proteolytic activity. This subunit is involved in antigen processing to generate class I binding peptides. The sequence is that of Proteasome subunit beta type-10 (PSMB10) from Bos taurus (Bovine).